Here is a 337-residue protein sequence, read N- to C-terminus: tRNA N6-adenosine threonylcarbamoyltransferase (337 aa).

The Fe cation site is built by His111 and His115. Substrate contacts are provided by residues 134 to 138, Asp167, Gly180, and Asn272; that span reads LVSGG. Asp300 contacts Fe cation.

The protein belongs to the KAE1 / TsaD family. It depends on Fe(2+) as a cofactor.

Its subcellular location is the cytoplasm. The catalysed reaction is L-threonylcarbamoyladenylate + adenosine(37) in tRNA = N(6)-L-threonylcarbamoyladenosine(37) in tRNA + AMP + H(+). Functionally, required for the formation of a threonylcarbamoyl group on adenosine at position 37 (t(6)A37) in tRNAs that read codons beginning with adenine. Is involved in the transfer of the threonylcarbamoyl moiety of threonylcarbamoyl-AMP (TC-AMP) to the N6 group of A37, together with TsaE and TsaB. TsaD likely plays a direct catalytic role in this reaction. This is tRNA N6-adenosine threonylcarbamoyltransferase from Shewanella amazonensis (strain ATCC BAA-1098 / SB2B).